The sequence spans 213 residues: MNIMLLGAPGCGKGTQAEQLVNKLNFIQVSTGDLMRKEISLNTRLGLKCQEYMNAGKYVPDQIVNQIVSQFLKNTNDKLIFDGYPRTLEQAKSLEQMLDLYNKKIDYVFYIDVNDQILIKRITNRLVCPLCKASFNLETRKPKQEGLCDFDNTKLVKRSDDSLDKVQIRLQTYKEQTLPLIDYFKTNSKFIEIKADDLSAEQVFNQIKGELKI.

10–15 (GCGKGT) is an ATP binding site. Positions 30 to 59 (STGDLMRKEISLNTRLGLKCQEYMNAGKYV) are NMP. Residues Thr-31, Arg-36, 57 to 59 (KYV), 83 to 86 (GYPR), and Gln-90 each bind AMP. The tract at residues 124-161 (NRLVCPLCKASFNLETRKPKQEGLCDFDNTKLVKRSDD) is LID. Position 125 (Arg-125) interacts with ATP. Zn(2+) contacts are provided by Cys-128 and Cys-131. Position 134–135 (134–135 (SF)) interacts with ATP. Residues Cys-148 and Asp-151 each contribute to the Zn(2+) site. AMP contacts are provided by Arg-158 and Arg-169. Asp-197 contributes to the ATP binding site.

This sequence belongs to the adenylate kinase family. Monomer.

Its subcellular location is the cytoplasm. It catalyses the reaction AMP + ATP = 2 ADP. The protein operates within purine metabolism; AMP biosynthesis via salvage pathway; AMP from ADP: step 1/1. Its function is as follows. Catalyzes the reversible transfer of the terminal phosphate group between ATP and AMP. Plays an important role in cellular energy homeostasis and in adenine nucleotide metabolism. The sequence is that of Adenylate kinase from Mycoplasma mycoides subsp. mycoides SC (strain CCUG 32753 / NCTC 10114 / PG1).